The primary structure comprises 565 residues: Coiled-coil domain-containing protein 17 (565 aa).

The tract at residues 58–87 is disordered; that stretch reads IMAQEKSRDQEASTSALKRLTEETAGSPGE. Coiled coils occupy residues 97-160 and 219-271; these read ARRM…TLGA and LQLQ…KVLS.

The protein is Coiled-coil domain-containing protein 17 (Ccdc17) of Mus musculus (Mouse).